The primary structure comprises 942 residues: Chitin synthase 4 (942 aa).

Residues 1–124 (MPPRYPFGGG…FDEHDGDVPL (124 aa)) are disordered. A compositionally biased stretch (basic and acidic residues) spans 14–26 (DEAHHQPLERRTT). Polar residues predominate over residues 27–36 (AEAQGNSFTH). N-linked (GlcNAc...) asparagine glycosylation is present at N604. A run of 7 helical transmembrane segments spans residues 641-661 (TIQL…FFIL), 674-694 (VPNL…FLLS), 709-729 (AMVV…YLAV), 755-775 (IVIS…MFLE), 783-803 (IVQY…YAFA), 885-905 (VLCW…ISSI), and 909-929 (TIYM…RMMG).

It belongs to the chitin synthase family. Class I subfamily.

Its subcellular location is the cell membrane. It localises to the cytoplasmic vesicle membrane. It carries out the reaction [(1-&gt;4)-N-acetyl-beta-D-glucosaminyl](n) + UDP-N-acetyl-alpha-D-glucosamine = [(1-&gt;4)-N-acetyl-beta-D-glucosaminyl](n+1) + UDP + H(+). Its function is as follows. Polymerizes chitin, a structural polymer of the cell wall and septum, by transferring the sugar moiety of UDP-GlcNAc to the non-reducing end of the growing chitin polymer. This Mycosarcoma maydis (Corn smut fungus) protein is Chitin synthase 4.